The chain runs to 421 residues: MSRRTCSDLRRPSSCPCRLGARTTVDGCKEESPVLSVTMKCFNCNPDLSELEVVKPEDSGIEASYSPVCLEPSCNDCVRNHERLSFIDSPIVGHDNKENQRVQNTLDSSNETEELEASRLYEDSGYSSFTQSDRDDGILILENFRNSPQARLLPSQSPDQHPNKTLLPVLHFERVVCSTLKKNGKRNPKVDREMLKEVIASGNFRLQNIIGKKMGLEHLDILAELSRRGFVHLLANILTKLSGMDLVNLSKVSRIWKKILENNKGAFQLYSKTMQRVIESSKLSLHATTRGYVVGRAALTCVQKSSTWAPPKKDVQIKSSSQRGQRVSTYSRHNEFVEVAKTLKNNESLKACVRCNFPAKYDHYLERAVCKRESCQFEYCTKCLCAYHNNKDCLNGKILKASCKVGPLPGTKKSKKNLQRL.

Ser-85 carries the post-translational modification Phosphoserine. Residues 114–219 form an interaction with EVI5 region; sequence ELEASRLYED…IGKKMGLEHL (106 aa). The F-box domain maps to 223-273; the sequence is AELSRRGFVHLLANILTKLSGMDLVNLSKVSRIWKKILENNKGAFQLYSKT. The interval 236–313 is sufficient for interaction with RPS6KA2; Prevents association of CDC20 with RPS6KA2; sequence NILTKLSGMD…KSSTWAPPKK (78 aa). The interval 236 to 383 is requires for efficient binding to CDC20; it reads NILTKLSGMD…SCQFEYCTKC (148 aa). Positions 280 to 421 are inhibits APC ubiquitin ligase activity; sequence SSKLSLHATT…KKSKKNLQRL (142 aa). Residues 296 to 299 are competitively blocks access of APC substrates to the D-box coreceptor formed by FZR1 and ANAPC10; the sequence is RAAL. A ZBR-type zinc finger spans residues 348-396; it reads SLKACVRCNFPAKYDHYLERAVCKRESCQFEYCTKCLCAYHNNKDCLNG. Zn(2+) is bound by residues Cys-352, Cys-355, Cys-370, Cys-375, Cys-380, Cys-383, His-388, and Cys-393. Residues 352–394 form an allows a rapid multiple mono-ubiquitination of the APC substrate, but strongly inhibits the slow ubiquitin chain elongation catalyzed by UBCH10 region; the sequence is CVRCNFPAKYDHYLERAVCKRESCQFEYCTKCLCAYHNNKDCL. The segment at 411 to 421 is sufficient to suppress UBE2S activity; essential for interaction with UBE2S; competitively inhibits the rapide ubiquitin chain elongation by UBE2D1 which blocks UBE2D1 with APC; indispensable for recruitment and position of FBXO5 to the catalytic site of APC; abrogates the inhibition of ubiquitin chain assembly primarily catalyzed by UBE2S; inhibits the ubiquitination by either UBE2C or UBE2D1; that stretch reads TKKSKKNLQRL.

In terms of assembly, part of a SCF (SKP1-cullin-F-box) protein ligase complex. Interacts with BTRC; mediates proteolysis by the SCF ubiquitin ligase complex leading to activation of APC in late mitosis and subsequent mitotic progression. Interacts with FZR1/CDH1 and the N-terminal substrate-binding domain of CDC20; prevents APC activation. Also interacts with EVI5 which blocks its phosphorylation by PLK1 and prevents its subsequent binding to BTRC and degradation. Interacts simultaneously with anaphase promoting complex (APC), through at least ANAPC2, CDC23, CDC27, the APC substrate GMNN and the APC activator FZR1. Interacts with UBE2S; interferes with the activity of UBE2S mainly by disrupting the dynamic electrostatic association between the C-terminal tail of UBE2S and ANAPC2. Interacts with RPS6KA2; cooperates to induce the metaphase arrest of early blastomeres; increases and stabilizes interaction of FBXO5 with CDC20. In terms of processing, phosphorylation by CDK2 and subsequently by PLK1 triggers degradation during early mitosis through ubiquitin-mediated proteolysis by the SCF ubiquitin ligase complex containing the F-box protein BTRC. This degradation is necessary for the activation of APC in late mitosis and subsequent mitotic progression. Phosphorylated by RPS6KA2; increases and stabilizes interaction with CDC20. Ubiquitinated by the SCF(BTRC) complex following phosphorylation by PLK1. Undergoes both 'Lys-11' and 'Lys-48'-linked polyubiquitination by APC-FZR1 complex leading to degradation during G1 phase by the proteasome. Degraded through the SCF(BTRC) complex; degradation occurs during oocyte maturation, between germinal vesicle breakdown (GVBD) and meiosis I, and is required for the meiosis I-meiosis II transition. As to expression, expressed in oocytes and granulosa cells. Expressed in proliferating cells compartments in hair follicle and skin epidermis, spermatogonia, and intestinal crypts.

The protein resides in the nucleus. The protein localises to the cytoplasm. It is found in the cytoskeleton. Its subcellular location is the spindle. It functions in the pathway protein modification; protein ubiquitination. Regulator of APC activity during mitotic and meiotic cell cycle. During mitotic cell cycle plays a role as both substrate and inhibitor of APC-FZR1 complex. During G1 phase, plays a role as substrate of APC-FZR1 complex E3 ligase. Then switches as an inhibitor of APC-FZR1 complex during S and G2 leading to cell-cycle commitment. As APC inhibitor, prevents the degradation of APC substrates at multiple levels: by interacting with APC and blocking access of APC substrates to the D-box co-receptor, formed by FZR1 and ANAPC10; by suppressing ubiquitin ligation and chain elongation by APC by preventing the UBE2C and UBE2S activities. Plays a role in genome integrity preservation by coordinating DNA replication with mitosis through APC inhibition in interphase to stabilize CCNA2 and GMNN in order to promote mitosis and prevent rereplication and DNA damage-induced cellular senescence. During oocyte maturation, plays a role in meiosis through inactivation of APC-FZR1 complex. Inhibits APC through RPS6KA2 interaction that increases FBXO5 affiniy for CDC20 leading to the metaphase arrest of the second meiotic division before fertilization. Controls entry into the first meiotic division through inactivation of APC-FZR1 complex. Promotes migration and osteogenic differentiation of mesenchymal stem cells. In Mus musculus (Mouse), this protein is F-box only protein 5.